Reading from the N-terminus, the 388-residue chain is GTPase Obg (388 aa).

The 159-residue stretch at 4–162 folds into the Obg domain; sequence SNFVDYVKIY…MTVIMELKLL (159 aa). The OBG-type G domain occupies 163–329; sequence ADVGLVGFPN…LKDILWEELN (167 aa). Residues 169–176, 194–198, 216–219, 283–286, and 310–312 contribute to the GTP site; these read GFPNAGKS, FTTLE, DIPG, TKSD, and SSV. Mg(2+) is bound by residues Ser-176 and Thr-196. A disordered region spans residues 352–388; the sequence is LKDMGEDEELDYEYEEDADDEDDDLDYEYEEEDWEEK. A compositionally biased stretch (acidic residues) spans 356 to 388; sequence GEDEELDYEYEEDADDEDDDLDYEYEEEDWEEK.

Belongs to the TRAFAC class OBG-HflX-like GTPase superfamily. OBG GTPase family. As to quaternary structure, monomer. It depends on Mg(2+) as a cofactor.

Its subcellular location is the cytoplasm. Its function is as follows. An essential GTPase which binds GTP, GDP and possibly (p)ppGpp with moderate affinity, with high nucleotide exchange rates and a fairly low GTP hydrolysis rate. Plays a role in control of the cell cycle, stress response, ribosome biogenesis and in those bacteria that undergo differentiation, in morphogenesis control. This Bacteroides thetaiotaomicron (strain ATCC 29148 / DSM 2079 / JCM 5827 / CCUG 10774 / NCTC 10582 / VPI-5482 / E50) protein is GTPase Obg.